Here is an 873-residue protein sequence, read N- to C-terminus: F-BAR domain only protein 1 (873 aa).

The 248-residue stretch at 1 to 248 folds into the F-BAR domain; sequence MSYFGEHFWG…NVENVTVDML (248 aa). The interval 1-275 is mediates membrane-binding; it reads MSYFGEHFWG…LDFDAYSSAA (275 aa). The segment at 153–172 is disordered; that stretch reads RENTSQKEMDKAETKSKKAA. Residues 155–178 adopt a coiled-coil conformation; it reads NTSQKEMDKAETKSKKAADSLRRS. A mediates interaction with the adaptor protein complex AP-2 region spans residues 267–439; it reads DFDAYSSAAL…KSLFGPPLES (173 aa). Ser295, Ser343, and Ser368 each carry phosphoserine. The tract at residues 302–347 is disordered; that stretch reads SVDFLESDSGVPPEVDDEGFTVRPDISQNNGAEPPRFSSSDSDFDD. Disordered regions lie at residues 381–600 and 813–833; these read GSLI…RGPS and SGHLSASWQPQSGPSTPSPVA. Residues 447 to 466 are compositionally biased toward low complexity; that stretch reads TGSSSLGFTSSPSPFSSSSP. Ser518 is subject to Phosphoserine. Over residues 567–576 the composition is skewed to low complexity; it reads SLSPSPLGSS. The interval 593-873 is mediates interaction with AGFG1, CALM, DAB2, EPS15, EPS15R, ITSN1 and clathrin; it reads HGISRGPSPV…FATGMYLVSC (281 aa). Ser600 bears the Phosphoserine mark. Residues 609-872 form the MHD domain; the sequence is ALPVATAFTE…RFATGMYLVS (264 aa). Over residues 816 to 827 the composition is skewed to polar residues; the sequence is LSASWQPQSGPS.

It belongs to the FCHO family. In terms of assembly, may oligomerize and form homotetramer. Interacts with AP2A2 and AP2B1; 2 subunits of the adaptor protein complex AP-2. Interacts with DAB2. Interacts with clathrin (CLTC or CLTCL1). Interacts with EPS15, EPS15R and ITSN1. Interacts with AGFG1 and CALM. May interact with ACVR1; linking this receptor to clathrin-mediated endocytosis. In terms of tissue distribution, mainly detected in brain and spleen.

It localises to the membrane. Its subcellular location is the clathrin-coated pit. Functionally, functions in an early step of clathrin-mediated endocytosis. Has both a membrane binding/bending activity and the ability to recruit proteins essential to the formation of functional clathrin-coated pits. May regulate Bmp signaling by regulating clathrin-mediated endocytosis of Bmp receptors. Involved in the regulation of T-cell poliferation and activation. Affects TCR clustering upon receptor triggering and modulates its internalisation, playing a role in TCR-dependent T-cell activation. This Mus musculus (Mouse) protein is F-BAR domain only protein 1.